Here is a 101-residue protein sequence, read N- to C-terminus: Protein SSXA1 (101 aa).

The KRAB-related domain maps to 19–83 (ETCQAFEDIS…ERVTKSVLSD (65 aa)). The tract at residues 73–101 (KERVTKSVLSDSDEVSSHESQDKRKNPVV) is disordered. A compositionally biased stretch (basic and acidic residues) spans 87–101 (VSSHESQDKRKNPVV).

The protein belongs to the SSX family. In terms of tissue distribution, specifically expressed in testis (at protein level). Not detected in other tissues tested (at protein level).

The protein localises to the nucleus. Functionally, could act as a modulator of transcription. In Mus musculus (Mouse), this protein is Protein SSXA1.